Reading from the N-terminus, the 534-residue chain is uncharacterized protein (534 aa).

5 helical membrane passes run 4–22 (ILVLLCVIALGLLVGRVSF), 24–46 (GISLGTSAILFVALLAGHYGWTI), 56–75 (ALFVYCVGISAGPTFFRGLA), 82–104 (AITGSVIVLTGVAVTWTSARLLG), and 134–156 (PAAVAVGFGVAYPIGIIAVVLFV). The segment at 167 to 187 (GDSDGTDSASETSGQSSAEIA) is disordered. Residues 172–187 (TDSASETSGQSSAEIA) are compositionally biased toward polar residues. RCK C-terminal domains follow at residues 180–264 (GQSS…TLGE) and 265–349 (LQDT…AVGH). Helical transmembrane passes span 359–378 (LLSLVAGIVLGIFVGNLSLQ), 382–401 (FSMSLGIAGGPLMVGLILGH), 408–430 (IRGSYPPAAMLLMTEGGLALFLA), 445–467 (MERGAMLCVAAAAIAIIPLLVGF), 479–501 (WQSLGATCGGMTSTPGLAVLTGA), and 511–533 (YVAAYPVALVLITVAAPWLVELI).

The protein belongs to the AAE transporter (TC 2.A.81) family.

The protein resides in the cell membrane. This is an uncharacterized protein from Rhodopirellula baltica (strain DSM 10527 / NCIMB 13988 / SH1).